We begin with the raw amino-acid sequence, 703 residues long: MAGVPDNVKGVVELDPWLAPYGDILSARRFLADKWRHDIEHAVPGGRRSLVEFARDAYKSYGLHADAQSKSITYREWAPNATRAFLVGDFNGWDETSHELQNKDEFGVFTGVFGPGADGDFMIPHDSRVKVVFELADGSRIHRLPAWIKRATQPSKETAKEWGPSYEARFWNPASPYKFKHERPRLDPNVESLRIYEAHVGISTPEPRVGSYSEFTKDVLPRIRDLGYNAIQLMAIMEHAYYASFGYQVTNFFAVSSRYGTPEELKELIDTAHGMGIQVLLDVVHSHASKNVSDGLNMFDGTDYQYFHSISSGRGEHPLWDSRLFNYGSFEVQRFLLANLAFYIDVYQFDGFRFDGVTSMLYHHHGVGERGAFSGDYNEYLSDHSGVDHEALAYLMLANDLIHDMLPANGVTVAEDVSGYPTLCLPRSVGGCGFDYRLAMALPDMWIKLLKESKDEDWSMGHIVYTLVNRRYKEKVVAYAESHDQALVGDKTLAFWMMDAAMYTDMTVLKELTPVVDRGIALHKLIRLITHSLGGESYLNFEGNEFGHPEWLDFPNANNGDSYQYARRQFNLVDDGLLRYKHLYAFDKAMQEAEGKHKWLNTPQAYVSLKHETDKVISFERNGLVFIFNFHPTQSFTDYRIGVDEAGAYRIILNSDREEFGGHRRIEEENSVFHTTDLEWNGRRNFIQVYLPSRTALVLARNP.

W93 and K130 together coordinate (1,4-alpha-D-glucosyl)n. D355 functions as the Nucleophile in the catalytic mechanism. E415 serves as the catalytic Proton donor.

Belongs to the glycosyl hydrolase 13 family. GlgB subfamily.

It is found in the cytoplasm. The catalysed reaction is Transfers a segment of a (1-&gt;4)-alpha-D-glucan chain to a primary hydroxy group in a similar glucan chain.. It participates in glycan biosynthesis; glycogen biosynthesis. Glycogen-branching enzyme participates in the glycogen biosynthetic process along with glycogenin and glycogen synthase. Generates alpha-1,6-glucosidic branches from alpha-1,4-linked glucose chains, to increase solubility of the glycogen polymer. In Eremothecium gossypii (strain ATCC 10895 / CBS 109.51 / FGSC 9923 / NRRL Y-1056) (Yeast), this protein is 1,4-alpha-glucan-branching enzyme (GLC3).